Reading from the N-terminus, the 158-residue chain is UPF0262 protein Rsph17025_0594 (158 aa).

It belongs to the UPF0262 family.

The sequence is that of UPF0262 protein Rsph17025_0594 from Cereibacter sphaeroides (strain ATCC 17025 / ATH 2.4.3) (Rhodobacter sphaeroides).